Here is an 89-residue protein sequence, read N- to C-terminus: Small ribosomal subunit protein uS17 (89 aa).

It belongs to the universal ribosomal protein uS17 family. As to quaternary structure, part of the 30S ribosomal subunit.

Functionally, one of the primary rRNA binding proteins, it binds specifically to the 5'-end of 16S ribosomal RNA. The chain is Small ribosomal subunit protein uS17 from Bacteroides fragilis (strain ATCC 25285 / DSM 2151 / CCUG 4856 / JCM 11019 / LMG 10263 / NCTC 9343 / Onslow / VPI 2553 / EN-2).